The sequence spans 205 residues: ATP-dependent Clp protease proteolytic subunit (205 aa).

The active-site Nucleophile is the Ser-108. His-133 is a catalytic residue.

This sequence belongs to the peptidase S14 family. In terms of assembly, fourteen ClpP subunits assemble into 2 heptameric rings which stack back to back to give a disk-like structure with a central cavity, resembling the structure of eukaryotic proteasomes.

The protein resides in the cytoplasm. The enzyme catalyses Hydrolysis of proteins to small peptides in the presence of ATP and magnesium. alpha-casein is the usual test substrate. In the absence of ATP, only oligopeptides shorter than five residues are hydrolyzed (such as succinyl-Leu-Tyr-|-NHMec, and Leu-Tyr-Leu-|-Tyr-Trp, in which cleavage of the -Tyr-|-Leu- and -Tyr-|-Trp bonds also occurs).. Cleaves peptides in various proteins in a process that requires ATP hydrolysis. Has a chymotrypsin-like activity. Plays a major role in the degradation of misfolded proteins. The sequence is that of ATP-dependent Clp protease proteolytic subunit from Alcanivorax borkumensis (strain ATCC 700651 / DSM 11573 / NCIMB 13689 / SK2).